We begin with the raw amino-acid sequence, 340 residues long: Methionine import ATP-binding protein MetN 2 (340 aa).

An ABC transporter domain is found at 2–241; the sequence is ITLQNVVKEY…PKEKVTQRFV (240 aa). 38–45 serves as a coordination point for ATP; that stretch reads GYSGAGKS.

It belongs to the ABC transporter superfamily. Methionine importer (TC 3.A.1.24) family. As to quaternary structure, the complex is composed of two ATP-binding proteins (MetN), two transmembrane proteins (MetI) and a solute-binding protein (MetQ).

The protein resides in the cell membrane. The enzyme catalyses L-methionine(out) + ATP + H2O = L-methionine(in) + ADP + phosphate + H(+). It catalyses the reaction D-methionine(out) + ATP + H2O = D-methionine(in) + ADP + phosphate + H(+). In terms of biological role, part of the ABC transporter complex MetNIQ involved in methionine import. Responsible for energy coupling to the transport system. The chain is Methionine import ATP-binding protein MetN 2 from Listeria innocua serovar 6a (strain ATCC BAA-680 / CLIP 11262).